A 623-amino-acid chain; its full sequence is Dynein axonemal intermediate chain 2 (623 aa).

WD repeat units lie at residues Lys214–Glu254, Ser261–Glu302, Gly362–Met401, Tyr405–Ala445, and Val450–Gln489. The disordered stretch occupies residues Ala565–Ile602. Residues Lys570 to Ser579 show a composition bias toward basic residues. Over residues Ala584–Ala598 the composition is skewed to acidic residues.

This sequence belongs to the dynein intermediate chain family. As to quaternary structure, consists of at least two heavy chains and a number of intermediate and light chains. Interacts with DNAAF2. Interacts with DNAAF6/PIH1D3. Interacts with HEATR2; probably involved in outer arm dynein assembly. Interacts with CFAP53. Predominantly expressed in ovary, testis and lung.

The protein localises to the cytoplasm. It is found in the cytoskeleton. The protein resides in the cilium axoneme. Its subcellular location is the dynein axonemal particle. Functionally, part of the dynein complex of respiratory cilia. This is Dynein axonemal intermediate chain 2 (Dnai2) from Mus musculus (Mouse).